Consider the following 136-residue polypeptide: Large ribosomal subunit protein uL16 (136 aa).

The protein belongs to the universal ribosomal protein uL16 family. Part of the 50S ribosomal subunit.

Binds 23S rRNA and is also seen to make contacts with the A and possibly P site tRNAs. The protein is Large ribosomal subunit protein uL16 of Rickettsia massiliae (strain Mtu5).